A 1068-amino-acid polypeptide reads, in one-letter code: Carbamoyl phosphate synthase large chain (1068 aa).

The segment at 1–401 is carboxyphosphate synthetic domain; sequence MPLNKDIKKV…AFLKGIRSLE (401 aa). 12 residues coordinate ATP: Arg129, Arg169, Gly175, Gly176, Lys208, Val210, Glu215, Gly241, Ile242, His243, Gln284, and Glu298. The ATP-grasp 1 domain occupies 133–327; it reads RNVMSRINEP…IAKVAAKIAL (195 aa). Mg(2+) contacts are provided by Gln284, Glu298, and Asn300. 3 residues coordinate Mn(2+): Gln284, Glu298, and Asn300. The segment at 402-549 is oligomerization domain; that stretch reads IGKYSLEHKK…YSTYDVYDEV (148 aa). Residues 550–932 are carbamoyl phosphate synthetic domain; the sequence is EVSKNKKVIV…ALYKGFIGAN (383 aa). Residues 674-864 enclose the ATP-grasp 2 domain; the sequence is DELLEKLQIS…IVDIATRVML (191 aa). Residues Arg710, Lys749, Leu751, Glu755, Gly780, Val781, His782, Ser783, Gln823, and Glu835 each contribute to the ATP site. 3 residues coordinate Mg(2+): Gln823, Glu835, and Asn837. Residues Gln823, Glu835, and Asn837 each coordinate Mn(2+). An MGS-like domain is found at 933 to 1068; the sequence is MSIKKEKGTI…ETLHIFDLSN (136 aa). The interval 933 to 1068 is allosteric domain; it reads MSIKKEKGTI…ETLHIFDLSN (136 aa).

Belongs to the CarB family. In terms of assembly, composed of two chains; the small (or glutamine) chain promotes the hydrolysis of glutamine to ammonia, which is used by the large (or ammonia) chain to synthesize carbamoyl phosphate. Tetramer of heterodimers (alpha,beta)4. Requires Mg(2+) as cofactor. The cofactor is Mn(2+).

It carries out the reaction hydrogencarbonate + L-glutamine + 2 ATP + H2O = carbamoyl phosphate + L-glutamate + 2 ADP + phosphate + 2 H(+). It catalyses the reaction hydrogencarbonate + NH4(+) + 2 ATP = carbamoyl phosphate + 2 ADP + phosphate + 2 H(+). It participates in amino-acid biosynthesis; L-arginine biosynthesis; carbamoyl phosphate from bicarbonate: step 1/1. It functions in the pathway pyrimidine metabolism; UMP biosynthesis via de novo pathway; (S)-dihydroorotate from bicarbonate: step 1/3. Its function is as follows. Large subunit of the glutamine-dependent carbamoyl phosphate synthetase (CPSase). CPSase catalyzes the formation of carbamoyl phosphate from the ammonia moiety of glutamine, carbonate, and phosphate donated by ATP, constituting the first step of 2 biosynthetic pathways, one leading to arginine and/or urea and the other to pyrimidine nucleotides. The large subunit (synthetase) binds the substrates ammonia (free or transferred from glutamine from the small subunit), hydrogencarbonate and ATP and carries out an ATP-coupled ligase reaction, activating hydrogencarbonate by forming carboxy phosphate which reacts with ammonia to form carbamoyl phosphate. In Clostridium botulinum (strain Loch Maree / Type A3), this protein is Carbamoyl phosphate synthase large chain.